An 804-amino-acid polypeptide reads, in one-letter code: Serine/threonine-protein kinase ATG1 (804 aa).

The Protein kinase domain maps to 12–308 (FTIGPEIGRG…FQEFFNDPLI (297 aa)). ATP contacts are provided by residues 18 to 26 (IGRGSFANV) and Lys-41. The active-site Proton acceptor is Asp-158. Disordered stretches follow at residues 339 to 364 (TSPP…ERAP), 395 to 415 (INKS…KGAR), and 455 to 506 (PSPH…MPIS). Over residues 404–415 (TVKDGQIKKGAR) the composition is skewed to basic and acidic residues. Residues 462 to 495 (NEHSAANPSGPTETQTQRRFSPSSRTSSIGSNRR) show a composition bias toward polar residues.

The protein belongs to the protein kinase superfamily. Ser/Thr protein kinase family. APG1/unc-51/ULK1 subfamily. As to quaternary structure, homodimer. Forms a ternary complex with ATG13 and ATG17.

It is found in the cytoplasm. The protein resides in the preautophagosomal structure membrane. The enzyme catalyses L-seryl-[protein] + ATP = O-phospho-L-seryl-[protein] + ADP + H(+). It carries out the reaction L-threonyl-[protein] + ATP = O-phospho-L-threonyl-[protein] + ADP + H(+). Functionally, serine/threonine protein kinase involved in the cytoplasm to vacuole transport (Cvt) and found to be essential in autophagy, where it is required for the formation of autophagosomes. Involved in the clearance of protein aggregates which cannot be efficiently cleared by the proteasome. Required for selective autophagic degradation of the nucleus (nucleophagy) as well as for mitophagy which contributes to regulate mitochondrial quantity and quality by eliminating the mitochondria to a basal level to fulfill cellular energy requirements and preventing excess ROS production. Also involved in endoplasmic reticulum-specific autophagic process, in selective removal of ER-associated degradation (ERAD) substrates. Plays a key role in ATG9 and ATG23 cycling through the pre-autophagosomal structure and is necessary to promote ATG18 binding to ATG9 through phosphorylation of ATG9. Catalyzes phosphorylation of ATG4, decreasing the interaction between ATG4 and ATG8 and impairing deconjugation of PE-conjugated forms of ATG8. In Pichia angusta (Yeast), this protein is Serine/threonine-protein kinase ATG1.